We begin with the raw amino-acid sequence, 215 residues long: UPF0502 protein YceH (215 aa).

N6-acetyllysine is present on K80.

This sequence belongs to the UPF0502 family.

The sequence is that of UPF0502 protein YceH from Escherichia fergusonii (strain ATCC 35469 / DSM 13698 / CCUG 18766 / IAM 14443 / JCM 21226 / LMG 7866 / NBRC 102419 / NCTC 12128 / CDC 0568-73).